A 678-amino-acid polypeptide reads, in one-letter code: Glycine--tRNA ligase beta subunit (678 aa).

This sequence belongs to the class-II aminoacyl-tRNA synthetase family. As to quaternary structure, tetramer of two alpha and two beta subunits.

It localises to the cytoplasm. It carries out the reaction tRNA(Gly) + glycine + ATP = glycyl-tRNA(Gly) + AMP + diphosphate. In Streptococcus suis (strain 98HAH33), this protein is Glycine--tRNA ligase beta subunit.